We begin with the raw amino-acid sequence, 194 residues long: uncharacterized protein (194 aa).

Positions 1 to 29 (MKKAFLVFLSVVLVTTVFLVKQQESVAQA) are cleaved as a signal peptide. Residues 104-131 (KVDELLKKAGQIVEEKVEAAKEIAASKD) are a coiled coil. The chain crosses the membrane as a helical span at residues 149-171 (YFYYVSYVAAAGALILIILAIDI).

The protein localises to the membrane. This is an uncharacterized protein from Bacillus subtilis (strain 168).